Here is a 336-residue protein sequence, read N- to C-terminus: Glycerol-3-phosphate dehydrogenase [NAD(P)+] (336 aa).

NADPH is bound by residues S11, W12, R32, and K106. The sn-glycerol 3-phosphate site is built by K106 and G136. Residue A140 coordinates NADPH. Residues K191, D244, S254, R255, and N256 each contribute to the sn-glycerol 3-phosphate site. Residue K191 is the Proton acceptor of the active site. NADPH is bound at residue R255. NADPH contacts are provided by V279 and E281.

The protein belongs to the NAD-dependent glycerol-3-phosphate dehydrogenase family.

The protein localises to the cytoplasm. The enzyme catalyses sn-glycerol 3-phosphate + NAD(+) = dihydroxyacetone phosphate + NADH + H(+). The catalysed reaction is sn-glycerol 3-phosphate + NADP(+) = dihydroxyacetone phosphate + NADPH + H(+). The protein operates within membrane lipid metabolism; glycerophospholipid metabolism. Its function is as follows. Catalyzes the reduction of the glycolytic intermediate dihydroxyacetone phosphate (DHAP) to sn-glycerol 3-phosphate (G3P), the key precursor for phospholipid synthesis. The sequence is that of Glycerol-3-phosphate dehydrogenase [NAD(P)+] from Frankia casuarinae (strain DSM 45818 / CECT 9043 / HFP020203 / CcI3).